The chain runs to 420 residues: Multiple sugar-binding protein (420 aa).

The first 22 residues, 1–22, serve as a signal peptide directing secretion; the sequence is MKWYKKIGLLGIVGLTSVLLAA. Cys-23 is lipidated: N-palmitoyl cysteine. Residue Cys-23 is the site of S-diacylglycerol cysteine attachment.

This sequence belongs to the bacterial solute-binding protein 1 family.

The protein resides in the cell membrane. Its function is as follows. Involved in a binding protein-dependent transport system responsible for the uptake of melibiose, raffinose and isomaltotriose. This Streptococcus mutans serotype c (strain ATCC 700610 / UA159) protein is Multiple sugar-binding protein.